The following is a 463-amino-acid chain: UDP-N-acetylmuramoylalanine--D-glutamate ligase (463 aa).

121–127 (GTNGKST) contributes to the ATP binding site.

The protein belongs to the MurCDEF family.

The protein localises to the cytoplasm. The catalysed reaction is UDP-N-acetyl-alpha-D-muramoyl-L-alanine + D-glutamate + ATP = UDP-N-acetyl-alpha-D-muramoyl-L-alanyl-D-glutamate + ADP + phosphate + H(+). The protein operates within cell wall biogenesis; peptidoglycan biosynthesis. Its function is as follows. Cell wall formation. Catalyzes the addition of glutamate to the nucleotide precursor UDP-N-acetylmuramoyl-L-alanine (UMA). This is UDP-N-acetylmuramoylalanine--D-glutamate ligase (murD) from Rhizobium meliloti (strain 1021) (Ensifer meliloti).